The chain runs to 159 residues: Large ribosomal subunit protein uL22c (159 aa).

The protein belongs to the universal ribosomal protein uL22 family. Part of the 50S ribosomal subunit.

The protein resides in the plastid. The protein localises to the chloroplast. Functionally, this protein binds specifically to 23S rRNA. The globular domain of the protein is located near the polypeptide exit tunnel on the outside of the subunit, while an extended beta-hairpin is found that lines the wall of the exit tunnel in the center of the 70S ribosome. The protein is Large ribosomal subunit protein uL22c (rpl22) of Ipomoea purpurea (Common morning glory).